Here is a 502-residue protein sequence, read N- to C-terminus: Glycerol kinase (502 aa).

ADP is bound at residue T14. The ATP site is built by T14, T15, and S16. T14 is a sn-glycerol 3-phosphate binding site. An ADP-binding site is contributed by R18. Positions 84, 85, 136, and 246 each coordinate sn-glycerol 3-phosphate. Residues R84, E85, Y136, D246, and Q247 each coordinate glycerol. Positions 268 and 311 each coordinate ADP. ATP-binding residues include T268, G311, Q315, and G412. 2 residues coordinate ADP: G412 and N416.

This sequence belongs to the FGGY kinase family. As to quaternary structure, homotetramer and homodimer (in equilibrium). Heterodimer with EIIA-Glc. Binds 1 zinc ion per glycerol kinase EIIA-Glc dimer. The zinc ion is important for dimerization.

The enzyme catalyses glycerol + ATP = sn-glycerol 3-phosphate + ADP + H(+). Its pathway is polyol metabolism; glycerol degradation via glycerol kinase pathway; sn-glycerol 3-phosphate from glycerol: step 1/1. Its activity is regulated as follows. Activity of this regulatory enzyme is affected by several metabolites. Allosterically and non-competitively inhibited by fructose 1,6-bisphosphate (FBP) and unphosphorylated phosphocarrier protein EIIA-Glc (III-Glc), an integral component of the bacterial phosphotransferase (PTS) system. Its function is as follows. Key enzyme in the regulation of glycerol uptake and metabolism. Catalyzes the phosphorylation of glycerol to yield sn-glycerol 3-phosphate. The chain is Glycerol kinase from Shigella flexneri.